Here is a 678-residue protein sequence, read N- to C-terminus: Elongation factor G 2 (678 aa).

The tr-type G domain occupies 4–278 (QKLRNIGIIA…AVVDYLPSPQ (275 aa)). Residues 13-20 (AHVDAGKT), 77-81 (DTPGH), and 131-134 (NKMD) contribute to the GTP site.

Belongs to the TRAFAC class translation factor GTPase superfamily. Classic translation factor GTPase family. EF-G/EF-2 subfamily.

The protein resides in the cytoplasm. Catalyzes the GTP-dependent ribosomal translocation step during translation elongation. During this step, the ribosome changes from the pre-translocational (PRE) to the post-translocational (POST) state as the newly formed A-site-bound peptidyl-tRNA and P-site-bound deacylated tRNA move to the P and E sites, respectively. Catalyzes the coordinated movement of the two tRNA molecules, the mRNA and conformational changes in the ribosome. This Hahella chejuensis (strain KCTC 2396) protein is Elongation factor G 2.